The sequence spans 183 residues: Copper transporter 4 (183 aa).

The tract at residues 1–21 (MAMPMPMPPPGPGGDAPPAPT) is disordered. The next 2 helical transmembrane spans lie at 56–76 (VGMYFLCLLLVLALAALAEAL) and 115–135 (LAYLVMLAVMSFNAGVLLAAV).

This sequence belongs to the copper transporter (Ctr) (TC 1.A.56) family. SLC31A subfamily.

The protein resides in the membrane. Involved in the transport of copper. The protein is Copper transporter 4 (COPT4) of Oryza sativa subsp. japonica (Rice).